Here is a 767-residue protein sequence, read N- to C-terminus: MASTRSIELEHFEERDKRPRPGSRRGAPSSSGGSSISGPKGNGLIPSPAHSAHCSFYRTRTLQALSSEKKAKKARFYRNGDRYFKGLVFAISSDRFRSFDALLIELTRSLSDNVNLPQGVRTIYTVDGSRKVTSLDELLEGESYVCASNEPFRKVDYTKNVNPNWSVNIKGGTTRTLAVASAKSEVKESKDFIKPKLVTVIRSGVKPRKAVRILLNKKTAHSFEQVLTDITEAIKLDSGVVKRLCTLDGKQVTCLQDFFGDDDVFIACGPEKYRYAQDDFVLDHSECRVLKSSYSRASAAKYSGSRSPGLSRRSKSPASVKRAGHSSAYSTAKSPVNGTPSSQLSTPKSTKSSSSSPTSPGSFRGLKQISAQGRSSSNVNGGPELDRCMSPEGVNGNRCSESFTLLEKYRIGKVIGDGNFAVVKECMDRSTGKEFALKIIDKAKCCGKEHLIENEVSILRRVKHPNIIMLVEEMETTTELFLVMELVKGGDLFDAITSSTKYTERDGSAMVYNLASALRYLHGLSIVHRDIKPENLLVCEYPDGTKSLKLGDFGLATVVEGPLYTVCGTPTYVAPEIIAETGYGLKVDVWAAGVITYILLCGFPPFRSENNLQEDLFDQILAGKLEFPAPYWDNITDSAKELISQMLQVNVEARCTAGEILSHPWVSDDASQENNMQAEVTGKLKQHFNNALPKQNSTTTGVSVIMNTALDKEGQVFCSKHCRDSSKSSREQTSAREAPPPPESPRPPGPPATSGCDPAGTWRRHRD.

Positions M1–L44 are disordered. A compositionally biased stretch (basic and acidic residues) spans I7–P19. The span at R24–G43 shows a compositional bias: low complexity. At T61 the chain carries Phosphothreonine. Doublecortin domains lie at K72–T158 and K196–D279. The span at K301–S311 shows a compositional bias: low complexity. Residues K301 to P391 are disordered. Residues S327–G338 are compositionally biased toward polar residues. The segment covering T339–S362 has biased composition (low complexity). Residues I369–N380 are compositionally biased toward polar residues. S377 bears the Phosphoserine mark. Residues Y409–V666 form the Protein kinase domain. ATP contacts are provided by residues I415–V423 and K438. The Proton acceptor role is filled by D530. S662 carries the post-translational modification Phosphoserine. The residue at position 681 (T681) is a Phosphothreonine. The segment covering H721–S734 has biased composition (basic and acidic residues). The disordered stretch occupies residues H721 to D767. Pro residues predominate over residues A738–P751.

It belongs to the protein kinase superfamily. CAMK Ser/Thr protein kinase family. CaMK subfamily. As to quaternary structure, interacts with MAPK8IP1/JIP-1, MAPK8IP2/JIP-2, MAPK9/JNK2, PPP1R9B/NEURABIN-2 and actin. Binds to and stabilizes microtubules; binding affinity is strongly reduced by autophosphorylation. In terms of processing, autophosphorylated.

It is found in the cytoplasm. The protein resides in the cytoskeleton. It catalyses the reaction L-seryl-[protein] + ATP = O-phospho-L-seryl-[protein] + ADP + H(+). It carries out the reaction L-threonyl-[protein] + ATP = O-phospho-L-threonyl-[protein] + ADP + H(+). In terms of biological role, protein kinase with a significantly reduced Ca(2+)+/CAM affinity and dependence compared to other members of the CaMK family. May play a role in the down-regulation of CRE-dependent gene activation probably by phosphorylation of the CREB coactivator CRTC2/TORC2 and the resulting retention of TORC2 in the cytoplasm. In Rattus norvegicus (Rat), this protein is Serine/threonine-protein kinase DCLK2 (Dclk2).